The sequence spans 34 residues: Photosystem II reaction center protein M (34 aa).

The chain crosses the membrane as a helical span at residues 7–27; sequence GFVATLLFVLVPAIFLIILYI.

Belongs to the PsbM family. As to quaternary structure, PSII is composed of 1 copy each of membrane proteins PsbA, PsbB, PsbC, PsbD, PsbE, PsbF, PsbH, PsbI, PsbJ, PsbK, PsbL, PsbM, PsbT, PsbX, PsbY, PsbZ, Psb30/Ycf12, peripheral proteins PsbO, CyanoQ (PsbQ), PsbU, PsbV and a large number of cofactors. It forms dimeric complexes.

It is found in the cellular thylakoid membrane. Its function is as follows. One of the components of the core complex of photosystem II (PSII). PSII is a light-driven water:plastoquinone oxidoreductase that uses light energy to abstract electrons from H(2)O, generating O(2) and a proton gradient subsequently used for ATP formation. It consists of a core antenna complex that captures photons, and an electron transfer chain that converts photonic excitation into a charge separation. This subunit is found at the monomer-monomer interface. This Synechococcus sp. (strain RCC307) protein is Photosystem II reaction center protein M.